Reading from the N-terminus, the 910-residue chain is Dynein axonemal assembly factor 1 homolog (910 aa).

LRR repeat units lie at residues 43-64, 65-86, 87-108, 111-132, and 136-157; these read GLKC…DHQS, QLRC…QHCK, QLDT…GSDI, VLNT…AELR, and FVSV…KVLA. The LRRCT domain maps to 171–209; the sequence is PVVNDIPSYRKTLILECKSLTYLDSRPVFDKDRACAEAW. The segment covering 217-230 has biased composition (basic and acidic residues); it reads ERKEHQRWKKEEQR. Disordered stretches follow at residues 217–275, 297–332, 344–399, 620–642, 662–682, and 855–910; these read ERKE…GDFE, TKGD…DPTL, SRAC…GSIL, EQVP…PVDQ, QVEV…IPEE, and EELE…QGDH. Over residues 314–331 the composition is skewed to polar residues; it reads STNSVDYITGSDSNSDPT. Residues 380 to 389 are compositionally biased toward low complexity; it reads SLSDSSSSSS. Positions 620-633 are enriched in basic and acidic residues; the sequence is EQVPDEVEANDKAS. A compositionally biased stretch (acidic residues) spans 855 to 865; it reads EELEELNEEED. Positions 866-878 are enriched in basic and acidic residues; that stretch reads PALKEAGDFKHDE.

Belongs to the DNAAF1 family.

Its subcellular location is the cell projection. The protein localises to the cilium. Cilium-specific protein required for cilia structures. The sequence is that of Dynein axonemal assembly factor 1 homolog from Anopheles gambiae (African malaria mosquito).